An 823-amino-acid chain; its full sequence is Transcription factor SPT20 homolog-like 1 (823 aa).

Disordered stretches follow at residues 246–273 (SVKPQQEQSDCPPPPELRVSTSGQKEER), 369–524 (PRKK…AAQP), 560–601 (GSSF…AVQA), 631–669 (VLTGPQQQSHQLVSLQQLQQPTAAHPPQPGPQGSALGLS), and 720–757 (LRQQQPQPQPPKLQLQPQWQPKPRQEQPQSQQQQPQHI). Residues 423–440 (SHSSSGPASVSQLSSWKT) are compositionally biased toward polar residues. Low complexity-rich tracts occupy residues 469–509 (SSSG…QKPS), 568–582 (APGSGAPAPAGISGS), and 636–650 (QQQSHQLVSLQQLQQ).

The protein belongs to the SPT20 family.

The polypeptide is Transcription factor SPT20 homolog-like 1 (SUPT20HL1) (Homo sapiens (Human)).